The following is an 89-amino-acid chain: Small ribosomal subunit protein uS15 (89 aa).

It belongs to the universal ribosomal protein uS15 family. Part of the 30S ribosomal subunit. Forms a bridge to the 50S subunit in the 70S ribosome, contacting the 23S rRNA.

In terms of biological role, one of the primary rRNA binding proteins, it binds directly to 16S rRNA where it helps nucleate assembly of the platform of the 30S subunit by binding and bridging several RNA helices of the 16S rRNA. Forms an intersubunit bridge (bridge B4) with the 23S rRNA of the 50S subunit in the ribosome. The polypeptide is Small ribosomal subunit protein uS15 (Paenarthrobacter aurescens (strain TC1)).